Here is a 146-residue protein sequence, read N- to C-terminus: Protein MGF 100-3L (146 aa).

This sequence belongs to the asfivirus MGF 100 family.

Its function is as follows. Plays a role in virus cell tropism, and may be required for efficient virus replication in macrophages. The protein is Protein MGF 100-3L of Ornithodoros (relapsing fever ticks).